Consider the following 216-residue polypeptide: Corrinoid protein DSY3155 (216 aa).

Residues 1-90 (MIMSLLDELK…EIAKKGMSEG (90 aa)) form the B12-binding N-terminal domain. In terms of domain architecture, B12-binding spans 93-216 (KGKIVLGTVE…VELANKILGK (124 aa)). Histidine 106 is a binding site for methylcob(III)alamin.

Belongs to the methylamine corrinoid protein family.

Functionally, probably harbors a corrinoid prosthetic group and acts as a methyl group carrier between MtgB and MtgA. A methyl group from glycine betaine is likely first transferred to the corrinoid prosthetic group of the enzyme by MtgB, and then transferred to tetrahydrofolate (THF) by MtgA. The methyl group may then be ultimately converted to carbon dioxide, and its oxidation would also provide reducing equivalents for anaerobic respiration. Thus, may function in the pathway that allows anaerobic methylotrophic growth of D.hafniense using glycine betaine. This chain is Corrinoid protein DSY3155, found in Desulfitobacterium hafniense (strain Y51).